Here is a 94-residue protein sequence, read N- to C-terminus: U27-theraphotoxin-Cg1a (94 aa).

The signal sequence occupies residues 1–22 (MIFLLPPVIFVMLLAESVLILG). The propeptide occupies 23-58 (DSEDADLMEMVQMSRPFFNPIIPAVEFVDLREERQR). Disulfide bonds link Cys60/Cys78, Cys67/Cys83, and Cys77/Cys88.

It belongs to the neurotoxin 14 (magi-1) family. OAIP-1 subfamily. Expressed by the venom gland.

It is found in the secreted. Probable ion channel inhibitor. This chain is U27-theraphotoxin-Cg1a, found in Chilobrachys guangxiensis (Chinese earth tiger tarantula).